Reading from the N-terminus, the 243-residue chain is 3-deoxy-manno-octulosonate cytidylyltransferase (243 aa).

The protein belongs to the KdsB family.

It localises to the cytoplasm. The enzyme catalyses 3-deoxy-alpha-D-manno-oct-2-ulosonate + CTP = CMP-3-deoxy-beta-D-manno-octulosonate + diphosphate. It functions in the pathway nucleotide-sugar biosynthesis; CMP-3-deoxy-D-manno-octulosonate biosynthesis; CMP-3-deoxy-D-manno-octulosonate from 3-deoxy-D-manno-octulosonate and CTP: step 1/1. It participates in bacterial outer membrane biogenesis; lipopolysaccharide biosynthesis. Its function is as follows. Activates KDO (a required 8-carbon sugar) for incorporation into bacterial lipopolysaccharide in Gram-negative bacteria. The protein is 3-deoxy-manno-octulosonate cytidylyltransferase of Bartonella tribocorum (strain CIP 105476 / IBS 506).